A 243-amino-acid chain; its full sequence is Chromosome partition protein MukE (243 aa).

The disordered stretch occupies residues 223–243; the sequence is LMENDTKSADEIDEEFDGEQE. Residues 233-243 show a composition bias toward acidic residues; sequence EIDEEFDGEQE.

It belongs to the MukE family. In terms of assembly, interacts, and probably forms a ternary complex, with MukF and MukB. The complex formation is stimulated by calcium or magnesium.

It is found in the cytoplasm. The protein resides in the nucleoid. Functionally, involved in chromosome condensation, segregation and cell cycle progression. May participate in facilitating chromosome segregation by condensation DNA from both sides of a centrally located replisome during cell division. Probably acts via its interaction with MukB and MukF. The chain is Chromosome partition protein MukE from Haemophilus influenzae (strain ATCC 51907 / DSM 11121 / KW20 / Rd).